Consider the following 189-residue polypeptide: ATP-dependent protease subunit HslV (189 aa).

Residue Thr-12 is part of the active site. Positions 172, 175, and 178 each coordinate Na(+).

This sequence belongs to the peptidase T1B family. HslV subfamily. A double ring-shaped homohexamer of HslV is capped on each side by a ring-shaped HslU homohexamer. The assembly of the HslU/HslV complex is dependent on binding of ATP.

The protein resides in the cytoplasm. The catalysed reaction is ATP-dependent cleavage of peptide bonds with broad specificity.. Allosterically activated by HslU binding. Its function is as follows. Protease subunit of a proteasome-like degradation complex believed to be a general protein degrading machinery. This is ATP-dependent protease subunit HslV from Ehrlichia ruminantium (strain Welgevonden).